The following is a 188-amino-acid chain: Antitoxin SocA (188 aa).

As to quaternary structure, interacts with cognate toxin SocB and with ClpX.

Its function is as follows. Antitoxin component of an atypical type II toxin-antitoxin (TA) system. Unlike most type II TA systems, neutralizes the toxic activity of cognate toxin SocB by acting as an adapter to promote its degradation by ClpXP; degradation is dependent on the N-terminus of ClpX. This Caulobacter vibrioides (strain NA1000 / CB15N) (Caulobacter crescentus) protein is Antitoxin SocA.